The primary structure comprises 418 residues: Serine--tRNA ligase (418 aa).

Position 231-233 (231-233 (TAE)) interacts with L-serine. Residue 262–264 (RSE) participates in ATP binding. Glutamate 285 is an L-serine binding site. 349 to 352 (EISS) provides a ligand contact to ATP. An L-serine-binding site is contributed by serine 385.

This sequence belongs to the class-II aminoacyl-tRNA synthetase family. Type-1 seryl-tRNA synthetase subfamily. As to quaternary structure, homodimer. The tRNA molecule binds across the dimer.

Its subcellular location is the cytoplasm. It catalyses the reaction tRNA(Ser) + L-serine + ATP = L-seryl-tRNA(Ser) + AMP + diphosphate + H(+). The catalysed reaction is tRNA(Sec) + L-serine + ATP = L-seryl-tRNA(Sec) + AMP + diphosphate + H(+). It functions in the pathway aminoacyl-tRNA biosynthesis; selenocysteinyl-tRNA(Sec) biosynthesis; L-seryl-tRNA(Sec) from L-serine and tRNA(Sec): step 1/1. Functionally, catalyzes the attachment of serine to tRNA(Ser). Is also able to aminoacylate tRNA(Sec) with serine, to form the misacylated tRNA L-seryl-tRNA(Sec), which will be further converted into selenocysteinyl-tRNA(Sec). The chain is Serine--tRNA ligase from Ureaplasma parvum serovar 3 (strain ATCC 27815 / 27 / NCTC 11736).